The primary structure comprises 20 residues: Putative beta-neurotoxin (20 aa).

Residues 1 to 20 enclose the LCN-type CS-alpha/beta domain; sequence KDGYLVGSDGCKYSCLTRPG.

Expressed by the venom gland.

Its subcellular location is the secreted. In terms of biological role, beta toxins bind voltage-independently at site-4 of sodium channels (Nav) and shift the voltage of activation toward more negative potentials thereby affecting sodium channel activation and promoting spontaneous and repetitive firing. This chain is Putative beta-neurotoxin, found in Tityus pachyurus (Colombian scorpion).